The chain runs to 673 residues: Vasorin (673 aa).

An N-terminal signal peptide occupies residues 1–23 (MCSRVPLLLPLLLLLALGPGVQG). Residues 24 to 51 (CPSGCQCSQPQTVFCTARQGTTVPRDVP) enclose the LRRNT domain. The Extracellular segment spans residues 24 to 575 (CPSGCQCSQP…VTQAREGNLP (552 aa)). LRR repeat units follow at residues 52 to 74 (PDTV…SFAG), 77 to 98 (GLQL…VFQP), 101 to 122 (NLSN…TFRG), 125 to 146 (RLER…AFDT), 149 to 170 (RLLE…RLPR), 171 to 191 (LLLL…ILDT), 193 to 214 (NVEA…LFSR), 217 to 238 (NLHD…IRGL), 240 to 262 (GLTR…DLAG), and 265 to 287 (ALQE…SGLF). Residue Asn-101 is glycosylated (N-linked (GlcNAc...) asparagine). N-linked (GlcNAc...) (complex) asparagine glycosylation is present at Asn-117. Asn-273 carries N-linked (GlcNAc...) asparagine glycosylation. The region spanning 298-351 (NPFNCVCPLSWFGPWVRESHVTLASPEETRCHFPPKNAGRLLLELDYADFGCPA) is the LRRCT domain. The segment covering 358 to 370 (VPTTRPVVREPTA) has biased composition (low complexity). The segment at 358-404 (VPTTRPVVREPTALSSSLAPTWLSPTEPATEAPSPPSTAPPTVGPVP) is disordered. Over residues 390–404 (PSPPSTAPPTVGPVP) the composition is skewed to pro residues. The EGF-like domain occupies 405–442 (QPQDCPPSTCLNGGTCHLGTRHHLACLCPEGFTGLYCE). Cystine bridges form between Cys-409–Cys-420, Cys-414–Cys-430, and Cys-432–Cys-441. Residues 460–558 (PPRSLTLGIE…ACGEAHTPPA (99 aa)) form the Fibronectin type-III domain. Asn-500 and Asn-528 each carry an N-linked (GlcNAc...) asparagine glycan. A helical transmembrane segment spans residues 576–596 (LLIAPALAAVLLAALAAVGAA). Residues 597-673 (YCVRRGRAMA…QSPLHAKPYI (77 aa)) lie on the Cytoplasmic side of the membrane.

As to quaternary structure, interacts with TGFB1, TGFB2 and TGFB3. Post-translationally, N-glycosylated. N-glycan heterogeneity at Asn-117: Hex5HexNAc4 (minor), dHex1Hex5HexNAc4 (major), Hex6HexNAc5 (minor) and dHex1Hex6HexNAc5 (minor). In terms of tissue distribution, expressed at highest levels in aorta, at intermediate levels in kidney and placenta and at lowest levels in brain, heart, liver, lung and skeletal muscle. Within the aorta, the strongest expression is found in the tunica media of the proximal ascending aorta, the descending thoracic aorta, the abdominal aorta and the coronary arteries. Within the kidney, expression is found in the interstitial cells.

Its subcellular location is the membrane. It localises to the secreted. May act as an inhibitor of TGF-beta signaling. This is Vasorin (VASN) from Homo sapiens (Human).